A 454-amino-acid polypeptide reads, in one-letter code: Glutaredoxin domain-containing cysteine-rich protein CG31559 (454 aa).

Disordered stretches follow at residues 30-88 and 217-239; these read ETAD…QRQK and RSAR…GSDS. Positions 33–45 are enriched in polar residues; the sequence is DSGNGSDLESTGL. Low complexity predominate over residues 58–69; sequence SSLGSDSMHGSS. Residues 70 to 84 show a composition bias toward polar residues; the sequence is TEYVRQSASQPSGQR. Basic and acidic residues predominate over residues 217-227; it reads RSARSGDEADH. Positions 295 to 400 constitute a Glutaredoxin domain; the sequence is NAKNFKEKDL…QLLKPYKSMA (106 aa).

The protein belongs to the GRXCR1 family.

This is Glutaredoxin domain-containing cysteine-rich protein CG31559 from Drosophila melanogaster (Fruit fly).